A 271-amino-acid chain; its full sequence is Small ribosomal subunit protein uS3 (271 aa).

The region spanning 40–108 (IRKFLKKRLY…TIIVNIVEVR (69 aa)) is the KH type-2 domain. Residues 210-271 (PTRDGVNPRE…RPQRTENKGN (62 aa)) are disordered. Residues 215 to 247 (VNPREESRKSDRRDNKRDNRRNDRRGNDRRGND) show a composition bias toward basic and acidic residues.

This sequence belongs to the universal ribosomal protein uS3 family. In terms of assembly, part of the 30S ribosomal subunit. Forms a tight complex with proteins S10 and S14.

In terms of biological role, binds the lower part of the 30S subunit head. Binds mRNA in the 70S ribosome, positioning it for translation. The chain is Small ribosomal subunit protein uS3 from Clostridioides difficile (strain 630) (Peptoclostridium difficile).